The primary structure comprises 344 residues: Mitochondrial substrate carrier family protein D (344 aa).

The Mitochondrial intermembrane segment spans residues 1–22 (MDSTKTNNKWAAAGILNSVGKD). Solcar repeat units follow at residues 17 to 104 (NSVG…CQSY), 119 to 212 (IPYH…MKRK), and 239 to 327 (VPAW…TRNL). A helical membrane pass occupies residues 23–43 (FVAGSVGGMSSIMAGHPFDTI). Residues 44–75 (KVMLQDASGNLPKFKNGFQALKYIMKVDGIKG) lie on the Mitochondrial matrix side of the membrane. A helical transmembrane segment spans residues 76-96 (IYRGLSVPLFSVSFTNSVFFA). At 97 to 116 (TNNFCQSYFHPPCKDENGED) the chain is on the mitochondrial intermembrane side. Residues 117–137 (ILIPYHKAAAAGAIAGGVISL) traverse the membrane as a helical segment. Over 138 to 186 (LITPRDLVKSKLQVQCRPFGSTNVSLQYKGPIDVIRQTIKRDGIKGMFK) the chain is Mitochondrial matrix. A helical transmembrane segment spans residues 187–207 (GIRSTFCRDIPGDAVYFVVYE). The Mitochondrial intermembrane segment spans residues 208–238 (FMKRKLLALSKNNNNNNNNNDNNDNSSPKAG). Residues 239–259 (VPAWVAIGAGGCAGMSFWMSI) form a helical membrane-spanning segment. At 260 to 301 (YPMDVVKTRIQTQPDHLPPQYTSVLQTITKIYREEGISVFFR) the chain is on the mitochondrial matrix side. The helical transmembrane segment at 302 to 321 (GFSATILRAFPTSAVNFLMY) threads the bilayer. Over 322-344 (ETTRNLLNSKDPFYNNNDHYNAE) the chain is Mitochondrial intermembrane.

This sequence belongs to the mitochondrial carrier (TC 2.A.29) family.

Its subcellular location is the mitochondrion inner membrane. Its function is as follows. Calcium-dependent mitochondrial solute carrier. Mitochondrial solute carriers shuttle metabolites, nucleotides, and cofactors through the mitochondrial inner membrane. The sequence is that of Mitochondrial substrate carrier family protein D (mcfD) from Dictyostelium discoideum (Social amoeba).